A 223-amino-acid chain; its full sequence is 7-cyano-7-deazaguanine synthase (223 aa).

An ATP-binding site is contributed by 10–20; that stretch reads FSGGQDSTTCL. 4 residues coordinate Zn(2+): C188, C197, C200, and C203.

Belongs to the QueC family. Zn(2+) serves as cofactor.

It carries out the reaction 7-carboxy-7-deazaguanine + NH4(+) + ATP = 7-cyano-7-deazaguanine + ADP + phosphate + H2O + H(+). Its pathway is purine metabolism; 7-cyano-7-deazaguanine biosynthesis. Functionally, catalyzes the ATP-dependent conversion of 7-carboxy-7-deazaguanine (CDG) to 7-cyano-7-deazaguanine (preQ(0)). The chain is 7-cyano-7-deazaguanine synthase from Phocaeicola vulgatus (strain ATCC 8482 / DSM 1447 / JCM 5826 / CCUG 4940 / NBRC 14291 / NCTC 11154) (Bacteroides vulgatus).